The sequence spans 213 residues: Eukaryotic translation initiation factor 4E (213 aa).

Phosphoserine; by CK2 is present on residues Ser-2 and Ser-15. Thr-22 is modified (phosphothreonine). Residues Ser-28 and Ser-30 each carry the phosphoserine modification. A Glycyl lysine isopeptide (Lys-Gly) (interchain with G-Cter in ubiquitin) cross-link involves residue Lys-114.

Belongs to the eukaryotic initiation factor 4E family. In terms of assembly, component of the eIF4F complex, which composition varies with external and internal environmental conditions. It is composed of at least eIF4A (TIF1/TIF2), eIF4E (TIF45) and eIF4G (TIF4631 or TIF4632). Interacts with PAT1 in a RNA-dependent manner. eIF4E is also known to interact with other partners.

It localises to the cytoplasm. The protein resides in the nucleus. In terms of biological role, recognizes and binds the 7-methylguanosine (m7G)-containing mRNA cap during an early step in the initiation of protein synthesis and facilitates ribosome binding by inducing the unwinding of the mRNAs secondary structures. The chain is Eukaryotic translation initiation factor 4E (CDC33) from Saccharomyces cerevisiae (strain ATCC 204508 / S288c) (Baker's yeast).